A 326-amino-acid chain; its full sequence is ELAV-like protein 1 (326 aa).

Residue serine 2 is modified to N-acetylserine. Serine 2 is modified (phosphoserine). The region spanning threonine 20–proline 98 is the RRM 1 domain. Residues serine 100 and serine 158 each carry the phosphoserine modification. The RRM 2 domain maps to alanine 106–asparagine 186. A Glycyl lysine isopeptide (Lys-Gly) (interchain with G-Cter in SUMO2) cross-link involves residue lysine 191. A phosphoserine mark is found at serine 197 and serine 202. An Omega-N-methylarginine modification is found at arginine 206. Arginine 217 carries the asymmetric dimethylarginine; by CARM1; alternate modification. Arginine 217 bears the Omega-N-methylarginine; alternate mark. Serine 221 and serine 318 each carry phosphoserine. In terms of domain architecture, RRM 3 spans tryptophan 244 to asparagine 322.

Belongs to the RRM elav family. As to quaternary structure, monomer and homodimer (in vitro). Interacts with ANP32A. Interacts with ZNF385A; the interaction is indirect and mRNA-dependent and may regulate p53/TP53 expression. Identified in a mRNP complex, at least composed of DHX9, DDX3X, ELAVL1, HNRNPU, IGF2BP1, ILF3, PABPC1, PCBP2, PTBP2, STAU1, STAU2, SYNCRIP and YBX1. Interacts with AGO1 and AGO2. Interacts with IGF2BP1. Interacts with IGF2BP2 and IGF2BP3. Interacts with HNRNPL. Interacts with DHX36; this interaction occurs in a RNA-dependent manner. Interacts with ILF3; this interaction occurs in a RNA-dependent manner. Interacts with PLEKHN1. Interacts with SHFL; the interaction increases in presence of RNA. Interacts with YBX1; interaction recruits ELAVL1 on C5-methylcytosine (m5C)-containing mRNAs, thereby promoting mRNA stability. Interacts with FXR1. Phosphorylated by MAPKAPK2. Phosphorylated by PRKCD. In terms of processing, methylated at Arg-217 by CARM1 in T-cells in response to LPS challenge.

The protein resides in the cytoplasm. It localises to the nucleus. The protein localises to the stress granule. Its subcellular location is the P-body. Functionally, RNA-binding protein that binds to the 3'-UTR region of mRNAs and increases their stability. Involved in embryonic stem cell (ESC) differentiation: preferentially binds mRNAs that are not methylated by N6-methyladenosine (m6A), stabilizing them, promoting ESC differentiation. Has also been shown to be capable of binding to m6A-containing mRNAs and contributes to MYC stability by binding to m6A-containing MYC mRNAs. Binds to poly-U elements and AU-rich elements (AREs) in the 3'-UTR of target mRNAs. Binds avidly to the AU-rich element in FOS and IL3/interleukin-3 mRNAs. In the case of the FOS AU-rich element, binds to a core element of 27 nucleotides that contain AUUUA, AUUUUA, and AUUUUUA motifs. Binds preferentially to the 5'-UUUU[AG]UUU-3' motif in vitro. With ZNF385A, binds the 3'-UTR of p53/TP53 mRNA to control their nuclear export induced by CDKN2A. Hence, may regulate p53/TP53 expression and mediate in part the CDKN2A anti-proliferative activity. May also bind with ZNF385A the CCNB1 mRNA. Increases the stability of the leptin mRNA harboring an AU-rich element (ARE) in its 3' UTR. The protein is ELAV-like protein 1 (Elavl1) of Mus musculus (Mouse).